The primary structure comprises 320 residues: 1-aminocyclopropane-1-carboxylate oxidase 3 (320 aa).

Residues 154–254 (PNFGTKVSNY…RMSIASFYNP (101 aa)) form the Fe2OG dioxygenase domain. Positions 178, 180, and 235 each coordinate Fe cation.

The protein belongs to the iron/ascorbate-dependent oxidoreductase family. The cofactor is Fe cation. In terms of tissue distribution, flowers.

The enzyme catalyses 1-aminocyclopropane-1-carboxylate + L-ascorbate + O2 = ethene + L-dehydroascorbate + hydrogen cyanide + CO2 + 2 H2O. It functions in the pathway alkene biosynthesis; ethylene biosynthesis via S-adenosyl-L-methionine; ethylene from S-adenosyl-L-methionine: step 2/2. This is 1-aminocyclopropane-1-carboxylate oxidase 3 (ACO3) from Cucumis melo (Muskmelon).